Reading from the N-terminus, the 187-residue chain is Protein GrpE (187 aa).

A compositionally biased stretch (low complexity) spans Met1 to Glu17. The interval Met1–Glu27 is disordered.

This sequence belongs to the GrpE family. In terms of assembly, homodimer.

The protein resides in the cytoplasm. Its function is as follows. Participates actively in the response to hyperosmotic and heat shock by preventing the aggregation of stress-denatured proteins, in association with DnaK and GrpE. It is the nucleotide exchange factor for DnaK and may function as a thermosensor. Unfolded proteins bind initially to DnaJ; upon interaction with the DnaJ-bound protein, DnaK hydrolyzes its bound ATP, resulting in the formation of a stable complex. GrpE releases ADP from DnaK; ATP binding to DnaK triggers the release of the substrate protein, thus completing the reaction cycle. Several rounds of ATP-dependent interactions between DnaJ, DnaK and GrpE are required for fully efficient folding. This chain is Protein GrpE, found in Thioalkalivibrio sulfidiphilus (strain HL-EbGR7).